The primary structure comprises 314 residues: Formimidoylglutamase (314 aa).

6 residues coordinate Mn(2+): H127, D153, H155, D157, D245, and D247.

This sequence belongs to the arginase family. The cofactor is Mn(2+).

It carries out the reaction N-formimidoyl-L-glutamate + H2O = formamide + L-glutamate. It functions in the pathway amino-acid degradation; L-histidine degradation into L-glutamate; L-glutamate from N-formimidoyl-L-glutamate (hydrolase route): step 1/1. Catalyzes the conversion of N-formimidoyl-L-glutamate to L-glutamate and formamide. In Aeromonas hydrophila subsp. hydrophila (strain ATCC 7966 / DSM 30187 / BCRC 13018 / CCUG 14551 / JCM 1027 / KCTC 2358 / NCIMB 9240 / NCTC 8049), this protein is Formimidoylglutamase.